Here is a 236-residue protein sequence, read N- to C-terminus: 2,3,4,5-tetrahydropyridine-2,6-dicarboxylate N-acetyltransferase (236 aa).

It belongs to the transferase hexapeptide repeat family. DapH subfamily.

It carries out the reaction (S)-2,3,4,5-tetrahydrodipicolinate + acetyl-CoA + H2O = L-2-acetamido-6-oxoheptanedioate + CoA. The protein operates within amino-acid biosynthesis; L-lysine biosynthesis via DAP pathway; LL-2,6-diaminopimelate from (S)-tetrahydrodipicolinate (acetylase route): step 1/3. Its function is as follows. Catalyzes the transfer of an acetyl group from acetyl-CoA to tetrahydrodipicolinate. This Thermotoga maritima (strain ATCC 43589 / DSM 3109 / JCM 10099 / NBRC 100826 / MSB8) protein is 2,3,4,5-tetrahydropyridine-2,6-dicarboxylate N-acetyltransferase.